We begin with the raw amino-acid sequence, 128 residues long: 3-aminoacrylate deaminase RutC (128 aa).

This sequence belongs to the RutC family.

It catalyses the reaction (Z)-3-aminoacrylate + H2O + H(+) = 3-oxopropanoate + NH4(+). Its function is as follows. Involved in pyrimidine catabolism. Catalyzes the deamination of 3-aminoacrylate to malonic semialdehyde, a reaction that can also occur spontaneously. RutC may facilitate the reaction and modulate the metabolic fitness, rather than catalyzing essential functions. This is 3-aminoacrylate deaminase RutC from Agrobacterium fabrum (strain C58 / ATCC 33970) (Agrobacterium tumefaciens (strain C58)).